Here is a 617-residue protein sequence, read N- to C-terminus: Chitin elicitor receptor kinase 1 (617 aa).

A signal peptide spans 1–23 (MKLKISLIAPILLLFSFFFAVES). The Extracellular portion of the chain corresponds to 24 to 232 (KCRTSCPLAL…KSSKQDGVGA (209 aa)). 3 disulfides stabilise this stretch: Cys25–Cys93, Cys29–Cys155, and Cys91–Cys153. 3 N-linked (GlcNAc...) asparagine glycosylation sites follow: Asn40, Asn52, and Asn102. The 29-residue stretch at 46-74 (VINQNLNSSIAPYDQINFDPILRYNSNIK) folds into the LysM 1; degenerate domain. Residues 108 to 140 (RQEDTYERVAISNYANLTTMESLQARNPFPATN) enclose the LysM 2; degenerate domain. Position 109-115 (109-115 (QEDTYER)) interacts with chitin. An N-linked (GlcNAc...) asparagine glycan is attached at Asn123. A chitin-binding site is contributed by 137–143 (PATNIPL). Asn152 carries N-linked (GlcNAc...) asparagine glycosylation. The region spanning 168-211 (VTYPLRPEDSLSSIARSSGVSADILQRYNPGVNFNSGNGIVYVP) is the LysM 3 domain. Residues 233 to 253 (GVIAGIVIGVIVALLLILFIV) traverse the membrane as a helical segment. Over 254–617 (YYAYRKNKSK…EDLVSLMSGR (364 aa)) the chain is Cytoplasmic. Phosphoserine is present on residues Ser266, Ser268, and Ser274. In terms of domain architecture, Protein kinase spans 322-594 (FNLSFKIGQG…YIVVALSTLF (273 aa)). ATP-binding positions include 328–336 (IGQGGFGAV) and Lys349. Tyr390 carries the post-translational modification Phosphotyrosine. Asp441 (proton acceptor) is an active-site residue. Phosphothreonine is present on residues Thr479 and Thr519.

It belongs to the protein kinase superfamily. Ser/Thr protein kinase family. Forms homodimers and homooligomers. Homodimerization is required to trigger plant defenses. Binds to chitin, chitosan and chito-oligomer oligosaccharide elicitors. Interaction with chitin octamer (NAG(8)) promotes homodimerization while shorter chitin oligomers inhibit homodimerization. Interacts with Pseudomonas syringae hopAB2/avrPtoB. Interacts (preferentially when unphosphorylated) with PBL27 at the plasma membrane. Binds to IOS1. Post-translationally, autophosphorylated. Autophosphorylation is induced by chitin and derivatives. Ubiquitinated and targeted to the proteasome by hopAB2/avrPtoB of Pseudomonas syringae pv. tomato DC3000. As to expression, expressed ubiquitously, with lowest expression in pollen.

It localises to the cell membrane. It catalyses the reaction L-seryl-[protein] + ATP = O-phospho-L-seryl-[protein] + ADP + H(+). It carries out the reaction L-threonyl-[protein] + ATP = O-phospho-L-threonyl-[protein] + ADP + H(+). With respect to regulation, activated by chitin-mediated homodimerization. Lysin motif (LysM) receptor kinase that functions as a cell surface receptor in chitin elicitor (chitooligosaccharides) signaling leading to innate immunity toward both biotic and abiotic stresses (e.g. tolerance to salinity, heavy-metal stresses, and Botrytis cinerea infection). Recognizes microbe-derived N-acetylglucosamine (NAG)-containing ligands. Involved in the resistance to pathogenic fungi Alternaria brassicicola and Erysiphe cichoracearum, probably by sensing microbe-associated molecular patterns (MAMP) and pathogen-associated molecular patterns (PAMP). Plays an essential role in detecting peptidoglycans (e.g. PGNs) and restricting bacterial growth. Target of the bacterial type III effector E3-ligase protein hopAB2/avrPtoB of Pseudomonas syringae pv. tomato DC3000 that mediates ubiquitination and subsequent proteolysis, thus blocking all defense responses by suppressing PAMP-triggered immunity (PTI). Mediates chitin-induced phosphorylation of PBL27. The sequence is that of Chitin elicitor receptor kinase 1 (CERK1) from Arabidopsis thaliana (Mouse-ear cress).